The chain runs to 459 residues: WPP domain-interacting protein 3 (459 aa).

Residues 1 to 17 (MNESVPDSVEDNGNSVP) are compositionally biased toward polar residues. A disordered region spans residues 1–78 (MNESVPDSVE…GPVRDEAAPV (78 aa)). Residues 52 to 66 (STRKGFGLKKWRRIK) are compositionally biased toward basic residues. 2 short sequence motifs (nuclear localization signal) span residues 60 to 61 (KK) and 63 to 64 (RR). The span at 67-78 (RDGPVRDEAAPV) shows a compositional bias: basic and acidic residues. Positions 86–87 (KR) match the Nuclear localization signal 3 motif. Disordered stretches follow at residues 240 to 266 (KEEV…NNNH) and 308 to 330 (TDEL…TSSG). The span at 251–266 (NGNKEDDGESKKNNNH) shows a compositional bias: basic and acidic residues. The segment covering 308–319 (TDELSSDQPSHQ) has biased composition (polar residues). Residues 331–375 (SKALILKEKVKLLEHKLEEARAALEAKEARIQELENSKIESELEC) adopt a coiled-coil conformation. Residues 426–459 (KLGFYILTQLILLVSILRFLVLQFSPASRLVIPT) form the KASH domain. The chain crosses the membrane as a helical span at residues 427–447 (LGFYILTQLILLVSILRFLVL).

As to quaternary structure, component of Ran complexes at least composed of WIT1 or WIT2, RANGAP1 or RANGAP2, and WIP1 or WIP2 or WIP3. Interacts with RANGAP1, WPP1/MAF1, and WPP2/MAF2. Interacts with SUN1 and SUN2. Core component of the LINC complex which is composed of inner nuclear membrane SUN domain-containing proteins coupled to outer nuclear membrane WIP and WIT proteins. The LINC complex also involves nucleoskeletal proteins CRWN/LINC and possibly KAKU4 and the cytoskeletal myosin KAKU1. Interacts with WIT2. As to expression, expressed in seedlings, roots, stems, leaves, and flowers.

It is found in the nucleus envelope. Its subcellular location is the nucleus membrane. In terms of biological role, mediates and enhances the nuclear envelope docking of RANGAP proteins mediated by WIT1 and WIT2 in the undifferentiated cells of root tips. As component of the SUN-WIP-WIT2-KAKU1 complex, mediates the transfer of cytoplasmic forces to the nuclear envelope (NE), leading to nuclear shape changes. In Arabidopsis thaliana (Mouse-ear cress), this protein is WPP domain-interacting protein 3 (WIP3).